The primary structure comprises 1450 residues: Arf-GAP with Rho-GAP domain, ANK repeat and PH domain-containing protein 1 (1450 aa).

Residues 6 to 70 (DAALSVAEWL…LAGLLRAHTS (65 aa)) enclose the SAM domain. The required for interaction with SH3KBP1 stretch occupies residues 81–90 (PVPMKRHIFR). 2 disordered regions span residues 89 to 144 (FRSP…LPPL) and 173 to 302 (TKEE…SSLS). Positions 92-102 (PPVPATPPEPL) are enriched in pro residues. Residues 190–199 (QSEEPLSTLP) are compositionally biased toward low complexity. A compositionally biased stretch (pro residues) spans 200-219 (QGPPQPPSPPPCPPEIPPKP). Composition is skewed to acidic residues over residues 225-236 (EFDDSDYDEVPE) and 269-286 (EGEELSGDDQGDEEEDDH). S229 is modified (phosphoserine). Y231 is subject to Phosphotyrosine; by PTK6. The region spanning 327–419 (PVIKAGWLDK…WMQALQQAMA (93 aa)) is the PH 1 domain. The residue at position 354 (T354) is a Phosphothreonine. The residue at position 428 (S428) is a Phosphoserine. Residues Y431 and Y504 each carry the phosphotyrosine modification. Residues 440 to 529 (QPDRAGSLEL…WLEAMQGAIA (90 aa)) form the PH 2 domain. In terms of domain architecture, Arf-GAP spans 535 to 660 (SEVAERIWAA…RYHPLFGNQE (126 aa)). The C4-type zinc finger occupies 550-576 (CADCGAPQPDWASINLCVVICKRCAGE). Position 738 is a phosphoserine (S738). The region spanning 743 to 850 (TVSHSGFLYK…WVKCIAKAFV (108 aa)) is the PH 3 domain. A Rho-GAP domain is found at 954-1139 (ASMGDTLSEQ…DLINHYVVVF (186 aa)). The 90-residue stretch at 1172 to 1261 (GDFICTVYLE…SHLVVKKHQA (90 aa)) folds into the Ras-associating domain. The PH 4 domain maps to 1274–1396 (GDTKHGMMKF…WFATFLFVQH (123 aa)). Phosphoserine occurs at positions 1428 and 1435.

In terms of assembly, interacts with SH3KBP1/CIN85 (via SH3 domains). The interaction is independent of EGF and does not affect ARAP1 GTPase-activating activity but is involved in regulating ubiquitination and endocytic trafficking of EGFR. ARAP1 competes with E3 ubiquitin-protein ligase CBL for binding to SH3KBP1, preventing interaction of CBL with SH3KBP1; this is likely to regulate SH3KBP1-mediated internalization of EGFR. Interacts with TNFRSF10A. Post-translationally, phosphorylated by PTK6 following EGF stimulation which enhances EGFR signaling by delaying EGFR down-regulation; the interaction is mediated by the SH2 domain of PTK6. Phosphorylation promotes association with the Golgi apparatus and endosomes. As to expression, detected in heart, skeletal muscle, spleen, kidney, liver, placenta, lung, peripheral blood leukocytes, adrenal gland, bone marrow, brain, lymph node, mammary gland, prostate, spinal cord, stomach, thyroid and trachea.

The protein localises to the cytoplasm. It localises to the golgi apparatus. Its subcellular location is the trans-Golgi network. It is found in the golgi stack. The protein resides in the cell membrane. The protein localises to the endosome. It localises to the multivesicular body. Its subcellular location is the cell projection. It is found in the ruffle. The protein resides in the podosome. The protein localises to the early endosome. Functionally, phosphatidylinositol 3,4,5-trisphosphate-dependent GTPase-activating protein that modulates actin cytoskeleton remodeling by regulating ARF and RHO family members. Activated by phosphatidylinositol 3,4,5-trisphosphate (PtdIns(3,4,5)P3) binding and, to a lesser extent, by phosphatidylinositol 3,4-bisphosphate (PtdIns(3,4)P2) binding. Has a preference for ARF1 and ARF5. Positively regulates the ring size of circular dorsal ruffles and promotes macropinocytosis. Acts as a bridging factor in osteoclasts to control actin and membrane dynamics. Regulates the condensing of osteoclast podosomes into sealing zones which segregate the bone-facing membrane from other membrane domains and are required for osteoclast resorption activity. Also regulates recruitment of the AP-3 complex to endosomal membranes and trafficking of lysosomal membrane proteins to the ruffled membrane border of osteoclasts to modulate bone resorption. Regulates the endocytic trafficking of EGFR. Regulates the incorporation of CD63 and CD9 into multivesicular bodies. Required in the retinal pigment epithelium (RPE) for photoreceptor survival due to its role in promoting RPE phagocytosis. This chain is Arf-GAP with Rho-GAP domain, ANK repeat and PH domain-containing protein 1 (ARAP1), found in Homo sapiens (Human).